The primary structure comprises 374 residues: Alginate lyase (374 aa).

A signal peptide spans 1 to 26; it reads MRNPKLKNLLAPTLLSLAMFAGATQA. Residues 67 to 68, 140 to 141, and Y258 each bind substrate; these read SK and HT.

The protein belongs to the polysaccharide lyase 5 family.

It is found in the periplasm. It catalyses the reaction Eliminative cleavage of alginate to give oligosaccharides with 4-deoxy-alpha-L-erythro-hex-4-enuronosyl groups at their non-reducing ends and beta-D-mannuronate at their reducing end.. Its function is as follows. Catalyzes the depolymerization of alginate by cleaving the beta-1,4 glycosidic bond between two adjacent sugar residues via a beta-elimination mechanism. May serve to degrade mislocalized alginate that is trapped in the periplasmic space. This chain is Alginate lyase, found in Cobetia marina (Deleya marina).